Consider the following 74-residue polypeptide: Ubiquitin-like protein FUBI (74 aa).

It belongs to the ubiquitin family.

The sequence is that of Ubiquitin-like protein FUBI (Fau) from Rattus norvegicus (Rat).